The chain runs to 407 residues: UPF0761 membrane protein AZOSEA40600 (407 aa).

A run of 6 helical transmembrane segments spans residues 29–49 (SLAF…IALF), 92–112 (GLTL…LMTI), 132–152 (LMVH…SVLA), 174–194 (FARL…YYAV), 207–227 (GGIA…LFIV), and 239–259 (FAVL…ILLG).

The protein belongs to the UPF0761 family.

The protein resides in the cell inner membrane. The polypeptide is UPF0761 membrane protein AZOSEA40600 (Aromatoleum aromaticum (strain DSM 19018 / LMG 30748 / EbN1) (Azoarcus sp. (strain EbN1))).